A 447-amino-acid polypeptide reads, in one-letter code: Probable cytosol aminopeptidase (447 aa).

Mn(2+)-binding residues include Lys-218 and Asp-223. Lys-230 is a catalytic residue. Residues Asp-241, Asp-300, and Glu-302 each coordinate Mn(2+). Arg-304 is a catalytic residue.

This sequence belongs to the peptidase M17 family. Mn(2+) is required as a cofactor.

It is found in the cytoplasm. The enzyme catalyses Release of an N-terminal amino acid, Xaa-|-Yaa-, in which Xaa is preferably Leu, but may be other amino acids including Pro although not Arg or Lys, and Yaa may be Pro. Amino acid amides and methyl esters are also readily hydrolyzed, but rates on arylamides are exceedingly low.. It catalyses the reaction Release of an N-terminal amino acid, preferentially leucine, but not glutamic or aspartic acids.. Presumably involved in the processing and regular turnover of intracellular proteins. Catalyzes the removal of unsubstituted N-terminal amino acids from various peptides. In Mycoplasma genitalium (strain ATCC 33530 / DSM 19775 / NCTC 10195 / G37) (Mycoplasmoides genitalium), this protein is Probable cytosol aminopeptidase (pepA).